The primary structure comprises 245 residues: Mitochondrial import inner membrane translocase subunit Tim21 (245 aa).

The transit peptide at 1–18 (MICAFLRVVRHAEKLHGS) directs the protein to the mitochondrion. Positions 64-97 (FWTQGPDPRKAKEDSSKQVSINRNQREETGVSTS) are disordered. The segment covering 70–79 (DPRKAKEDSS) has biased composition (basic and acidic residues). Residues 108 to 128 (TYLIVVLFGVSITGSLLYTIF) traverse the membrane as a helical segment.

This sequence belongs to the TIM21 family. As to quaternary structure, component of the TIM23 complex. Component of the MITRAC (mitochondrial translation regulation assembly intermediate of cytochrome c oxidase complex) complex, the core components of this complex being COA3/MITRAC12 and COX14. Interacts with COA3 and MT-CO1/COX1.

Its subcellular location is the mitochondrion membrane. In terms of biological role, participates in the translocation of transit peptide-containing proteins across the mitochondrial inner membrane. Also required for assembly of mitochondrial respiratory chain complex I and complex IV as component of the MITRAC (mitochondrial translation regulation assembly intermediate of cytochrome c oxidase complex) complex. Probably shuttles between the presequence translocase and respiratory-chain assembly intermediates in a process that promotes incorporation of early nuclear-encoded subunits into these complexes. In Rattus norvegicus (Rat), this protein is Mitochondrial import inner membrane translocase subunit Tim21 (Timm21).